Here is a 627-residue protein sequence, read N- to C-terminus: Hemocyanin D chain (627 aa).

Residues His171, His175, His202, His322, His326, and His362 each contribute to the Cu cation site. An N-linked (GlcNAc...) asparagine glycan is attached at Asn445. Cys531 and Cys579 are joined by a disulfide.

Belongs to the tyrosinase family. Hemocyanin subfamily. As to quaternary structure, tarantula hemocyanin is a 24-chain polymer with seven different chains identified. As to expression, hemolymph.

It is found in the secreted. The protein resides in the extracellular space. In terms of biological role, hemocyanins are copper-containing oxygen carriers occurring freely dissolved in the hemolymph of many mollusks and arthropods. The sequence is that of Hemocyanin D chain (HCD) from Aphonopelma sp. (American tarantula).